The sequence spans 176 residues: Ribose 1,5-bisphosphate phosphokinase PhnN (176 aa).

G10–D17 contacts ATP.

This sequence belongs to the ribose 1,5-bisphosphokinase family.

The enzyme catalyses alpha-D-ribose 1,5-bisphosphate + ATP = 5-phospho-alpha-D-ribose 1-diphosphate + ADP. It functions in the pathway metabolic intermediate biosynthesis; 5-phospho-alpha-D-ribose 1-diphosphate biosynthesis; 5-phospho-alpha-D-ribose 1-diphosphate from D-ribose 5-phosphate (route II): step 3/3. Functionally, catalyzes the phosphorylation of ribose 1,5-bisphosphate to 5-phospho-D-ribosyl alpha-1-diphosphate (PRPP). The sequence is that of Ribose 1,5-bisphosphate phosphokinase PhnN from Methylobacterium radiotolerans (strain ATCC 27329 / DSM 1819 / JCM 2831 / NBRC 15690 / NCIMB 10815 / 0-1).